The sequence spans 82 residues: DNA-directed RNA polymerase subunit Rpo5 (82 aa).

Belongs to the archaeal Rpo5/eukaryotic RPB5 RNA polymerase subunit family. As to quaternary structure, part of the RNA polymerase complex.

The protein localises to the cytoplasm. The enzyme catalyses RNA(n) + a ribonucleoside 5'-triphosphate = RNA(n+1) + diphosphate. DNA-dependent RNA polymerase (RNAP) catalyzes the transcription of DNA into RNA using the four ribonucleoside triphosphates as substrates. In Pyrococcus abyssi (strain GE5 / Orsay), this protein is DNA-directed RNA polymerase subunit Rpo5.